A 411-amino-acid chain; its full sequence is Lissencephaly-1 homolog (411 aa).

Residues 9-41 form the LisH domain; that stretch reads QREELNQAIADYLGSNGYADSLETFRKEADLST. Residues 56-83 adopt a coiled-coil conformation; sequence TSVIRLQKKVMELEAKLTEAEKEVIEGA. WD repeat units follow at residues 106–147, 148–187, 191–230, 233–272, 275–334, 337–376, and 379–411; these read GHRA…RSLK, GHTD…ECIK, GHDH…CVKT, GHRE…CKVE, DHEH…CLLT, GHDN…CMKT, and AHQH…WECR.

This sequence belongs to the WD repeat LIS1/nudF family.

The protein resides in the cytoplasm. Its subcellular location is the cytoskeleton. The protein localises to the microtubule organizing center. It is found in the centrosome. Positively regulates the activity of the minus-end directed microtubule motor protein dynein. May enhance dynein-mediated microtubule sliding by targeting dynein to the microtubule plus end. Required for several dynein- and microtubule-dependent processes. The chain is Lissencephaly-1 homolog from Drosophila yakuba (Fruit fly).